A 466-amino-acid chain; its full sequence is Cell division protein FtsP (466 aa).

A signal peptide (tat-type signal) is located at residues 1-28 (MNYSRRSLFKKTLIATALSALPATLLAA).

It belongs to the FtsP family. In terms of processing, predicted to be exported by the Tat system. The position of the signal peptide cleavage has not been experimentally proven.

Its subcellular location is the periplasm. Cell division protein that is required for growth during stress conditions. May be involved in protecting or stabilizing the divisomal assembly under conditions of stress. The protein is Cell division protein FtsP of Actinobacillus succinogenes (strain ATCC 55618 / DSM 22257 / CCUG 43843 / 130Z).